The sequence spans 430 residues: S-adenosylmethionine synthase (430 aa).

H14 provides a ligand contact to ATP. D16 contributes to the Mg(2+) binding site. E42 is a K(+) binding site. Residues E55 and Q98 each contribute to the L-methionine site. The interval 98 to 108 is flexible loop; that stretch reads QSADINRGVER. Residues 164 to 166, 254 to 255, D263, 269 to 270, A286, and K290 contribute to the ATP site; these read DAK, KF, and RK. D263 contacts L-methionine. Residue K294 coordinates L-methionine.

It belongs to the AdoMet synthase family. As to quaternary structure, homotetramer; dimer of dimers. Mg(2+) is required as a cofactor. Requires K(+) as cofactor.

Its subcellular location is the cytoplasm. The enzyme catalyses L-methionine + ATP + H2O = S-adenosyl-L-methionine + phosphate + diphosphate. It functions in the pathway amino-acid biosynthesis; S-adenosyl-L-methionine biosynthesis; S-adenosyl-L-methionine from L-methionine: step 1/1. Functionally, catalyzes the formation of S-adenosylmethionine (AdoMet) from methionine and ATP. The overall synthetic reaction is composed of two sequential steps, AdoMet formation and the subsequent tripolyphosphate hydrolysis which occurs prior to release of AdoMet from the enzyme. The chain is S-adenosylmethionine synthase from Bacteroides fragilis (strain ATCC 25285 / DSM 2151 / CCUG 4856 / JCM 11019 / LMG 10263 / NCTC 9343 / Onslow / VPI 2553 / EN-2).